The primary structure comprises 512 residues: Maturase K (512 aa).

Belongs to the intron maturase 2 family. MatK subfamily.

It is found in the plastid. The protein resides in the chloroplast. Its function is as follows. Usually encoded in the trnK tRNA gene intron. Probably assists in splicing its own and other chloroplast group II introns. In Lemna aequinoctialis (Lesser duckweed), this protein is Maturase K.